The sequence spans 347 residues: NADH-ubiquinone oxidoreductase chain 2 (347 aa).

Helical transmembrane passes span 1 to 21, 25 to 45, 59 to 79, 96 to 116, 122 to 142, 145 to 165, 178 to 198, 200 to 220, 242 to 262, 274 to 294, and 325 to 345; these read MNPL…SIIL, HWFM…PVLM, YFLT…INLM, LLIT…FWVP, VSLQ…LAVM, IFAS…IMIG, IMAY…IYNP, LMLL…MMFM, VLMM…GFMP, NSVI…FFYM, and LLAP…MFIL.

This sequence belongs to the complex I subunit 2 family. In terms of assembly, core subunit of respiratory chain NADH dehydrogenase (Complex I) which is composed of 45 different subunits. Interacts with TMEM242.

The protein localises to the mitochondrion inner membrane. The catalysed reaction is a ubiquinone + NADH + 5 H(+)(in) = a ubiquinol + NAD(+) + 4 H(+)(out). Core subunit of the mitochondrial membrane respiratory chain NADH dehydrogenase (Complex I) which catalyzes electron transfer from NADH through the respiratory chain, using ubiquinone as an electron acceptor. Essential for the catalytic activity and assembly of complex I. This Myosorex kihaulei (Kihaule's mouse shrew) protein is NADH-ubiquinone oxidoreductase chain 2.